The sequence spans 545 residues: MIRVSSAVQRHAQKLIVLFSLLFGASLLMSDNGFATDIKNTNASSPVNSESTKPTKAGEVKNVVRFAKTGSFDNDTVVRLARQLAKKPYVALKDPLPESLANISYDEYRDIRFKPDSAVWKADGLPYQMQLFHRGFFFQDLIEIALVEGNQATHLSYDPNMFTAGEVLQQNLPTEDIGYSGLRVHYPLNSPSYFDELFVFQGASYFRALGKGNAYGLSARGLAIKTADPAGEEFPIFRAFWVEKPNYDTNLIVVHALLDSPSVSGAYRFSIRPGENTRMDVEAVLFPRVELSKVGLAPATSMFMHSPNGREKTDDFRPSVHDSDGLLMINGRGERLWRPLANPSTLQVSAFMDNSPQGFGLMQRERDYANYQDLEAHYEKRPSLWVEPVGNWGPGAVVLTEIPTQSEIHDNIVAFWKPAQPLAAGSEYRFSYHLNWGAQPEANPQAITVSRTASGRADIAKPTPKRLFVIDYQVQGAKPAQMPEPKVRSNAGVISNVVLRDNPANNGYRLSFEFDPGEVTLAELRAELTLQEARPVETWLYRWTL.

The signal sequence occupies residues 1–35 (MIRVSSAVQRHAQKLIVLFSLLFGASLLMSDNGFA).

This sequence belongs to the OpgD/OpgG family.

It is found in the periplasm. It functions in the pathway glycan metabolism; osmoregulated periplasmic glucan (OPG) biosynthesis. Functionally, involved in the biosynthesis of osmoregulated periplasmic glucans (OPGs). This Vibrio cholerae serotype O1 (strain ATCC 39541 / Classical Ogawa 395 / O395) protein is Glucans biosynthesis protein G.